Consider the following 87-residue polypeptide: uncharacterized protein (87 aa).

2 helical membrane passes run 25–45 (LVAA…WLGG) and 53–73 (YAFL…LVTF).

The protein localises to the cell membrane. This is an uncharacterized protein from Paracoccus denitrificans.